Consider the following 255-residue polypeptide: ATP synthase subunit a 2 (255 aa).

Transmembrane regions (helical) follow at residues 26 to 46, 86 to 106, 131 to 151, 205 to 225, and 230 to 250; these read SINIDSMIMVWMVGLLFIGVF, LIGPLALTIFVWVFLMNSIDL, DVNVPVSMALGVFILIIGYTL, MIFILIALMPWWMQWALSVPW, and ILIVFLQAFIFMVLTIVYLAM.

This sequence belongs to the ATPase A chain family. In terms of assembly, F-type ATPases have 2 components, CF(1) - the catalytic core - and CF(0) - the membrane proton channel. CF(1) has five subunits: alpha(3), beta(3), gamma(1), delta(1), epsilon(1). CF(0) has three main subunits: a(1), b(2) and c(9-12). The alpha and beta chains form an alternating ring which encloses part of the gamma chain. CF(1) is attached to CF(0) by a central stalk formed by the gamma and epsilon chains, while a peripheral stalk is formed by the delta and b chains.

It localises to the cell inner membrane. In terms of biological role, key component of the proton channel; it plays a direct role in the translocation of protons across the membrane. The chain is ATP synthase subunit a 2 from Photobacterium profundum (strain SS9).